A 596-amino-acid polypeptide reads, in one-letter code: Elongation factor 4 (596 aa).

The tr-type G domain maps to 2–184; the sequence is SHIRNFSIIA…RLVHTIPAPE (183 aa). GTP-binding positions include 14-19 and 131-134; these read DHGKST and NKMD.

The protein belongs to the TRAFAC class translation factor GTPase superfamily. Classic translation factor GTPase family. LepA subfamily.

It is found in the cell inner membrane. The enzyme catalyses GTP + H2O = GDP + phosphate + H(+). Its function is as follows. Required for accurate and efficient protein synthesis under certain stress conditions. May act as a fidelity factor of the translation reaction, by catalyzing a one-codon backward translocation of tRNAs on improperly translocated ribosomes. Back-translocation proceeds from a post-translocation (POST) complex to a pre-translocation (PRE) complex, thus giving elongation factor G a second chance to translocate the tRNAs correctly. Binds to ribosomes in a GTP-dependent manner. This Pseudomonas putida (strain GB-1) protein is Elongation factor 4.